A 569-amino-acid chain; its full sequence is Potassium-transporting ATPase potassium-binding subunit (569 aa).

A run of 10 helical transmembrane segments spans residues 11 to 31 (LLLA…ACVF), 64 to 84 (LAYT…LYGI), 135 to 155 (AGLA…ALAV), 179 to 199 (LYLL…MGIP), 258 to 278 (FNIL…GKMV), 285 to 305 (WALI…VYIA), 384 to 404 (GLYG…LMVG), 423 to 443 (MLAV…AAVL), 490 to 510 (LGIS…AIAG), and 531 to 551 (LFVG…YFPA).

The protein belongs to the KdpA family. The system is composed of three essential subunits: KdpA, KdpB and KdpC.

The protein localises to the cell inner membrane. In terms of biological role, part of the high-affinity ATP-driven potassium transport (or Kdp) system, which catalyzes the hydrolysis of ATP coupled with the electrogenic transport of potassium into the cytoplasm. This subunit binds the periplasmic potassium ions and delivers the ions to the membrane domain of KdpB through an intramembrane tunnel. The polypeptide is Potassium-transporting ATPase potassium-binding subunit (Allorhizobium ampelinum (strain ATCC BAA-846 / DSM 112012 / S4) (Agrobacterium vitis (strain S4))).